The sequence spans 82 residues: MVLVQDLLHPTAASEARKHKLKTLVQGPRSYFLDVKCPGCLNITTVFSHAQTAVTCESCSTVLCTPTGGKAKLSEGTSFRRK.

The C4-type zinc finger occupies 37-59 (CPGCLNITTVFSHAQTAVTCESC).

The protein belongs to the eukaryotic ribosomal protein eS27 family. As to quaternary structure, component of the small ribosomal subunit (SSU). Mature yeast ribosomes consist of a small (40S) and a large (60S) subunit. The 40S small subunit contains 1 molecule of ribosomal RNA (18S rRNA) and 33 different proteins (encoded by 57 genes). The large 60S subunit contains 3 rRNA molecules (25S, 5.8S and 5S rRNA) and 46 different proteins (encoded by 81 genes). The cofactor is Zn(2+). Post-translationally, the N-terminus is not modified.

It localises to the cytoplasm. Component of the ribosome, a large ribonucleoprotein complex responsible for the synthesis of proteins in the cell. The small ribosomal subunit (SSU) binds messenger RNAs (mRNAs) and translates the encoded message by selecting cognate aminoacyl-transfer RNA (tRNA) molecules. The large subunit (LSU) contains the ribosomal catalytic site termed the peptidyl transferase center (PTC), which catalyzes the formation of peptide bonds, thereby polymerizing the amino acids delivered by tRNAs into a polypeptide chain. The nascent polypeptides leave the ribosome through a tunnel in the LSU and interact with protein factors that function in enzymatic processing, targeting, and the membrane insertion of nascent chains at the exit of the ribosomal tunnel. This chain is Small ribosomal subunit protein eS27B, found in Saccharomyces cerevisiae (strain ATCC 204508 / S288c) (Baker's yeast).